Here is a 364-residue protein sequence, read N- to C-terminus: Peptide chain release factor 1 (364 aa).

Residue Gln238 is modified to N5-methylglutamine. Basic and acidic residues predominate over residues 286-297 (DEKRQAEEDSTR). A disordered region spans residues 286-315 (DEKRQAEEDSTRRNLVGSGDRSERIRTYNY).

The protein belongs to the prokaryotic/mitochondrial release factor family. Post-translationally, methylated by PrmC. Methylation increases the termination efficiency of RF1.

It localises to the cytoplasm. Its function is as follows. Peptide chain release factor 1 directs the termination of translation in response to the peptide chain termination codons UAG and UAA. In Idiomarina loihiensis (strain ATCC BAA-735 / DSM 15497 / L2-TR), this protein is Peptide chain release factor 1.